A 442-amino-acid polypeptide reads, in one-letter code: uncharacterized protein (442 aa).

[4Fe-4S] cluster is bound by residues cysteine 43, cysteine 49, cysteine 52, and cysteine 130. Glutamine 273, tyrosine 302, glutamate 323, and aspartate 372 together coordinate S-adenosyl-L-methionine. Cysteine 399 acts as the Nucleophile in catalysis.

The protein belongs to the class I-like SAM-binding methyltransferase superfamily. RNA M5U methyltransferase family.

This is an uncharacterized protein from Protochlamydia amoebophila (strain UWE25).